The primary structure comprises 182 residues: ATP synthase subunit b, chloroplastic (182 aa).

A helical transmembrane segment spans residues 31 to 53 (IINISVVLGVLVYFGKGVLSNLL).

This sequence belongs to the ATPase B chain family. F-type ATPases have 2 components, F(1) - the catalytic core - and F(0) - the membrane proton channel. F(1) has five subunits: alpha(3), beta(3), gamma(1), delta(1), epsilon(1). F(0) has four main subunits: a(1), b(1), b'(1) and c(10-14). The alpha and beta chains form an alternating ring which encloses part of the gamma chain. F(1) is attached to F(0) by a central stalk formed by the gamma and epsilon chains, while a peripheral stalk is formed by the delta, b and b' chains.

It localises to the plastid. It is found in the chloroplast thylakoid membrane. Functionally, f(1)F(0) ATP synthase produces ATP from ADP in the presence of a proton or sodium gradient. F-type ATPases consist of two structural domains, F(1) containing the extramembraneous catalytic core and F(0) containing the membrane proton channel, linked together by a central stalk and a peripheral stalk. During catalysis, ATP synthesis in the catalytic domain of F(1) is coupled via a rotary mechanism of the central stalk subunits to proton translocation. Component of the F(0) channel, it forms part of the peripheral stalk, linking F(1) to F(0). This Welwitschia mirabilis (Tree tumbo) protein is ATP synthase subunit b, chloroplastic.